The primary structure comprises 69 residues: A-kinase anchor protein inhibitor 1 (69 aa).

Residues 39-69 (QESLRREGRPGDSRAWGQLGGCELTKKHEKK) are disordered. Over residues 41–50 (SLRREGRPGD) the composition is skewed to basic and acidic residues.

In terms of assembly, binds cAMP-dependent protein kinase (PKA). Interacts specifically with RII-regulatory subunits of PKA (PRKAR2A and PRKAR2B). As to expression, preferentially expressed in the neural tissues.

In terms of biological role, protein kinase A (PKA)-binding protein. Binds to type II regulatory subunits of protein kinase A (PKA) and may block the A-kinase anchoring protein (AKAP)-mediated subcellular localization of PKA. This is A-kinase anchor protein inhibitor 1 from Mus musculus (Mouse).